The chain runs to 280 residues: uncharacterized protein (280 aa).

Residues 26 to 127 (YFMSMKLLDV…TRVSILMRYY (102 aa)) enclose the KilA-N domain.

This is an uncharacterized protein from Vertebrata (FPV).